Reading from the N-terminus, the 185-residue chain is Anaphase-promoting complex subunit 10 (185 aa).

Thr2 carries the N-acetylthreonine modification. The 184-residue stretch at 2–185 (TTPNKTPPGA…IDFMMYRSIR (184 aa)) folds into the DOC domain. Lys169 is modified (N6-acetyllysine).

This sequence belongs to the APC10 family. The mammalian APC/C is composed at least of 14 distinct subunits ANAPC1, ANAPC2, CDC27/APC3, ANAPC4, ANAPC5, CDC16/APC6, ANAPC7, CDC23/APC8, ANAPC10, ANAPC11, CDC26/APC12, ANAPC13, ANAPC15 and ANAPC16 that assemble into a complex of at least 19 chains with a combined molecular mass of around 1.2 MDa; APC/C interacts with FZR1 and FBXO5. The C-terminus of APC10 binds to CDC27/APC3. Interacts with PIWIL1; interaction only takes place when PIWIL1 binds piRNA. Interacts with FBXO43; the interaction is direct.

Its pathway is protein modification; protein ubiquitination. Its function is as follows. Component of the anaphase promoting complex/cyclosome (APC/C), a cell cycle-regulated E3 ubiquitin ligase that controls progression through mitosis and the G1 phase of the cell cycle. The APC/C complex acts by mediating ubiquitination and subsequent degradation of target proteins: it mainly mediates the formation of 'Lys-11'-linked polyubiquitin chains and, to a lower extent, the formation of 'Lys-48'- and 'Lys-63'-linked polyubiquitin chains. The APC/C complex catalyzes assembly of branched 'Lys-11'-/'Lys-48'-linked branched ubiquitin chains on target proteins. The protein is Anaphase-promoting complex subunit 10 (ANAPC10) of Homo sapiens (Human).